The following is a 98-amino-acid chain: Cell division topological specificity factor (98 aa).

The protein belongs to the MinE family.

In terms of biological role, prevents the cell division inhibition by proteins MinC and MinD at internal division sites while permitting inhibition at polar sites. This ensures cell division at the proper site by restricting the formation of a division septum at the midpoint of the long axis of the cell. This Methylorubrum populi (strain ATCC BAA-705 / NCIMB 13946 / BJ001) (Methylobacterium populi) protein is Cell division topological specificity factor.